Reading from the N-terminus, the 227-residue chain is Translation initiation factor 6 (227 aa).

The protein belongs to the eIF-6 family.

In terms of biological role, binds to the 50S ribosomal subunit and prevents its association with the 30S ribosomal subunit to form the 70S initiation complex. This is Translation initiation factor 6 from Pyrococcus abyssi (strain GE5 / Orsay).